We begin with the raw amino-acid sequence, 428 residues long: Enolase (428 aa).

Residue Q162 coordinates (2R)-2-phosphoglycerate. Residue E204 is the Proton donor of the active site. Residues D241, E288, and D315 each coordinate Mg(2+). (2R)-2-phosphoglycerate-binding residues include K340, R369, S370, and K391. Catalysis depends on K340, which acts as the Proton acceptor.

The protein belongs to the enolase family. Requires Mg(2+) as cofactor.

The protein localises to the cytoplasm. Its subcellular location is the secreted. It is found in the cell surface. It carries out the reaction (2R)-2-phosphoglycerate = phosphoenolpyruvate + H2O. The protein operates within carbohydrate degradation; glycolysis; pyruvate from D-glyceraldehyde 3-phosphate: step 4/5. Functionally, catalyzes the reversible conversion of 2-phosphoglycerate (2-PG) into phosphoenolpyruvate (PEP). It is essential for the degradation of carbohydrates via glycolysis. The chain is Enolase from Azobacteroides pseudotrichonymphae genomovar. CFP2.